The sequence spans 347 residues: Protein RecA (347 aa).

70–77 (GPESSGKT) serves as a coordination point for ATP.

Belongs to the RecA family.

The protein resides in the cytoplasm. Its function is as follows. Can catalyze the hydrolysis of ATP in the presence of single-stranded DNA, the ATP-dependent uptake of single-stranded DNA by duplex DNA, and the ATP-dependent hybridization of homologous single-stranded DNAs. It interacts with LexA causing its activation and leading to its autocatalytic cleavage. This Ruegeria pomeroyi (strain ATCC 700808 / DSM 15171 / DSS-3) (Silicibacter pomeroyi) protein is Protein RecA.